The chain runs to 314 residues: Solute carrier family 25 member 44 (314 aa).

Solcar repeat units follow at residues 18 to 100 (KKFY…TRKF), 107 to 210 (SNTV…YAEQ), and 220 to 302 (PHIV…LKKL). 6 helical membrane-spanning segments follow: residues 20–42 (FYVF…TLIR), 71–90 (TGLY…GQCY), 113–133 (LVAG…IDVV), 185–201 (GYVA…AVWW), 222–239 (IVFQ…ASIL), and 278–296 (LSAR…VVGY).

This sequence belongs to the mitochondrial carrier (TC 2.A.29) family.

Its subcellular location is the mitochondrion membrane. The catalysed reaction is L-valine(in) = L-valine(out). It catalyses the reaction L-leucine(in) = L-leucine(out). Its function is as follows. Mitochondrial solute transporter which transports branched-chain amino acid (BCAA; valine, leucine and isoleucine) into mitochondria in brown adipose tissue (BAT). BAT is involved in BCAA catabolism and actively utilizes BCAA in the mitochondria for thermogenesis. This chain is Solute carrier family 25 member 44, found in Homo sapiens (Human).